Here is a 572-residue protein sequence, read N- to C-terminus: Acetyl-coenzyme A synthetase (572 aa).

Residue threonine 260 participates in CoA binding. ATP is bound by residues 333-335 (GEP), 354-359 (DTWWMT), aspartate 440, and arginine 455. Serine 463 is a binding site for CoA. Residue arginine 466 coordinates ATP. Mg(2+) is bound by residues valine 477, histidine 479, and isoleucine 482. Position 524 (lysine 524) interacts with CoA. An N6-acetyllysine modification is found at lysine 549.

Belongs to the ATP-dependent AMP-binding enzyme family. Interacts with FloT. Mg(2+) is required as a cofactor. Post-translationally, acetylated. Deacetylation by the SIR2-homolog deacetylase activates the enzyme.

Its subcellular location is the cell membrane. It is found in the membrane raft. The catalysed reaction is acetate + ATP + CoA = acetyl-CoA + AMP + diphosphate. In terms of biological role, catalyzes the conversion of acetate into acetyl-CoA (AcCoA), an essential intermediate at the junction of anabolic and catabolic pathways. AcsA undergoes a two-step reaction. In the first half reaction, AcsA combines acetate with ATP to form acetyl-adenylate (AcAMP) intermediate. In the second half reaction, it can then transfer the acetyl group from AcAMP to the sulfhydryl group of CoA, forming the product AcCoA. Has a role in growth and sporulation on acetate. The polypeptide is Acetyl-coenzyme A synthetase (acsA) (Bacillus subtilis (strain 168)).